Here is a 324-residue protein sequence, read N- to C-terminus: Ribosomal RNA small subunit methyltransferase H (324 aa).

S-adenosyl-L-methionine is bound by residues A40–H42, D60, L94, D108, and H115. A disordered region spans residues E301–G324. Over residues R315–G324 the composition is skewed to basic and acidic residues.

The protein belongs to the methyltransferase superfamily. RsmH family.

It localises to the cytoplasm. It catalyses the reaction cytidine(1402) in 16S rRNA + S-adenosyl-L-methionine = N(4)-methylcytidine(1402) in 16S rRNA + S-adenosyl-L-homocysteine + H(+). In terms of biological role, specifically methylates the N4 position of cytidine in position 1402 (C1402) of 16S rRNA. The chain is Ribosomal RNA small subunit methyltransferase H from Maridesulfovibrio salexigens (strain ATCC 14822 / DSM 2638 / NCIMB 8403 / VKM B-1763) (Desulfovibrio salexigens).